Reading from the N-terminus, the 447-residue chain is MNQNHTILQNLPVGQKVGIAFSGGLDTSAALLWMKLKGALPYAYTANLGQPDEDDYNAIPKKAMEYGAENARLIDCRAQLAHEGIAAIQCGAFHVSTGGIAYFNTTPLGRAVTGTMLVSAMKEDDVNIWGDGSTYKGNDIERFYRYGLLTNPALKIYKPWLDQQFIDELGGRHEMSEFLIANGFNYKMSVEKAYSTDSNMLGATHEAKDLEFLNSGIKIVKPIMGVAFWDENVEIEPEEVSVRFEEGVPVALNGKEYADPVELFLEANRIGGRHGLGMSDQIENRIIEAKSRGIYEAPGMALFHIAYERLVTGIHNEDTIEQYRINGLRLGRLLYQGRWFDSQALMLRETAQRWVAKAVTGEVTLELRRGNDYSILNTESPNLTYQPERLSMEKVEGAAFTPLDRIGQLTMRNLDITDTRAKLGIYSQSGLLSLGEGSVLPQLGNKQ.

ATP contacts are provided by residues 20 to 28 (AFSGGLDTS) and alanine 46. Tyrosine 102 serves as a coordination point for L-citrulline. Residues glycine 132 and threonine 134 each coordinate ATP. Residues threonine 134, asparagine 138, and aspartate 139 each coordinate L-aspartate. Asparagine 138 contributes to the L-citrulline binding site. Residue aspartate 139 coordinates ATP. 2 residues coordinate L-citrulline: arginine 142 and serine 195. Aspartate 197 serves as a coordination point for ATP. L-citrulline contacts are provided by threonine 204, glutamate 206, and glutamate 283.

It belongs to the argininosuccinate synthase family. Type 2 subfamily. As to quaternary structure, homotetramer.

The protein localises to the cytoplasm. It catalyses the reaction L-citrulline + L-aspartate + ATP = 2-(N(omega)-L-arginino)succinate + AMP + diphosphate + H(+). Its pathway is amino-acid biosynthesis; L-arginine biosynthesis; L-arginine from L-ornithine and carbamoyl phosphate: step 2/3. The sequence is that of Argininosuccinate synthase from Neisseria gonorrhoeae (strain ATCC 700825 / FA 1090).